A 256-amino-acid polypeptide reads, in one-letter code: MFPYLGIIIASIFGYLLGSVLWSVPITKWVKGVSIYEVGSNNPGATNTVRILGKRWGLAVALLDGFKVLITAAFAIGLSMIPNELFSKTSYFIPCIFVLIGHCWPIWFKFKGGKAVSCFLGLLIVVNYLYFLIFFIVWWIFAFKYRKVSLSSIIGTATILLLMWLPWTYGVMGYSLFNGYDSFIVAWDKHIVFSFYNLFHKFSSNIHGSNFADGMLTGQIVILIGMVILVVRHKSNIVKLKNKTEQPIYPKKEKNV.

A run of 6 helical transmembrane segments spans residues 2–22, 58–78, 90–110, 123–143, 153–173, and 211–231; these read FPYL…SVLW, LAVA…AIGL, SYFI…WFKF, LIVV…IFAF, IIGT…GVMG, and FADG…ILVV.

It belongs to the PlsY family. As to quaternary structure, probably interacts with PlsX.

Its subcellular location is the cell membrane. It catalyses the reaction an acyl phosphate + sn-glycerol 3-phosphate = a 1-acyl-sn-glycero-3-phosphate + phosphate. The protein operates within lipid metabolism; phospholipid metabolism. In terms of biological role, catalyzes the transfer of an acyl group from acyl-phosphate (acyl-PO(4)) to glycerol-3-phosphate (G3P) to form lysophosphatidic acid (LPA). This enzyme utilizes acyl-phosphate as fatty acyl donor, but not acyl-CoA or acyl-ACP. This Mesoplasma florum (strain ATCC 33453 / NBRC 100688 / NCTC 11704 / L1) (Acholeplasma florum) protein is Glycerol-3-phosphate acyltransferase.